A 607-amino-acid chain; its full sequence is Guanine nucleotide-binding protein-like 1 (607 aa).

Residues Met-1 to Lys-14 show a composition bias toward basic residues. The disordered stretch occupies residues Met-1–Tyr-81. Basic and acidic residues predominate over residues Gln-15–Leu-26. Phosphoserine is present on residues Ser-32, Ser-33, and Ser-34. Phosphothreonine occurs at positions 48 and 50. Ser-51 and Ser-68 each carry phosphoserine. A CP-type G domain is found at Trp-178 to Pro-418. Asn-225–Asp-228 provides a ligand contact to GTP. Residue Ser-324 is modified to Phosphoserine. Residues Gly-367–Ser-374 and Asp-411–Leu-415 contribute to the GTP site. Residues Gly-547–Cys-607 are disordered. The span at Gly-550–Thr-584 shows a compositional bias: acidic residues. Phosphoserine occurs at positions 561, 562, and 563.

This sequence belongs to the TRAFAC class YlqF/YawG GTPase family.

Possible regulatory or functional link with the histocompatibility cluster. This chain is Guanine nucleotide-binding protein-like 1 (GNL1), found in Macaca fascicularis (Crab-eating macaque).